Consider the following 207-residue polypeptide: Large ribosomal subunit protein bL25 (207 aa).

It belongs to the bacterial ribosomal protein bL25 family. CTC subfamily. As to quaternary structure, part of the 50S ribosomal subunit; part of the 5S rRNA/L5/L18/L25 subcomplex. Contacts the 5S rRNA. Binds to the 5S rRNA independently of L5 and L18.

In terms of biological role, this is one of the proteins that binds to the 5S RNA in the ribosome where it forms part of the central protuberance. The sequence is that of Large ribosomal subunit protein bL25 from Orientia tsutsugamushi (strain Boryong) (Rickettsia tsutsugamushi).